Reading from the N-terminus, the 292-residue chain is 33 kDa chaperonin (292 aa).

Disulfide bonds link C237/C239 and C270/C273.

Belongs to the HSP33 family. In terms of processing, under oxidizing conditions two disulfide bonds are formed involving the reactive cysteines. Under reducing conditions zinc is bound to the reactive cysteines and the protein is inactive.

It is found in the cytoplasm. Redox regulated molecular chaperone. Protects both thermally unfolding and oxidatively damaged proteins from irreversible aggregation. Plays an important role in the bacterial defense system toward oxidative stress. The polypeptide is 33 kDa chaperonin (Lachnoclostridium phytofermentans (strain ATCC 700394 / DSM 18823 / ISDg) (Clostridium phytofermentans)).